A 255-amino-acid polypeptide reads, in one-letter code: Small ribosomal subunit protein uS2 (255 aa).

The tract at residues glutamine 230–glycine 255 is disordered.

This sequence belongs to the universal ribosomal protein uS2 family.

The chain is Small ribosomal subunit protein uS2 from Rhizobium etli (strain CIAT 652).